A 287-amino-acid chain; its full sequence is 4-hydroxybenzoate octaprenyltransferase (287 aa).

Helical transmembrane passes span 41 to 61, 92 to 112, 133 to 153, 160 to 180, 218 to 238, and 267 to 287; these read LPLLVIFTVGTVLMRSAGCAI, VALAAALSLLAFLLILPLNAL, FFAIPQAYLGIAFGFGIPMAF, VPMLAWVMLLANVFWSVAYDT, LGIYVGIGVLLGFGALYWLGW, and NNWLGGALFAGIAAHYAATWF.

Belongs to the UbiA prenyltransferase family. It depends on Mg(2+) as a cofactor.

It is found in the cell inner membrane. It carries out the reaction all-trans-octaprenyl diphosphate + 4-hydroxybenzoate = 4-hydroxy-3-(all-trans-octaprenyl)benzoate + diphosphate. It functions in the pathway cofactor biosynthesis; ubiquinone biosynthesis. In terms of biological role, catalyzes the prenylation of para-hydroxybenzoate (PHB) with an all-trans polyprenyl group. Mediates the second step in the final reaction sequence of ubiquinone-8 (UQ-8) biosynthesis, which is the condensation of the polyisoprenoid side chain with PHB, generating the first membrane-bound Q intermediate 3-octaprenyl-4-hydroxybenzoate. The chain is 4-hydroxybenzoate octaprenyltransferase from Paraburkholderia xenovorans (strain LB400).